Here is a 197-residue protein sequence, read N- to C-terminus: Transmembrane protein 126A (197 aa).

Residues 1–35 are Mitochondrial matrix-facing; that stretch reads MENHEPDGTIIKENLTDIIARKINQLPEAERNLLE. A helical membrane pass occupies residues 36 to 56; that stretch reads NGSTYVGLNAALCGLIANSLF. Over 57 to 58 the chain is Mitochondrial intermembrane; the sequence is RR. The chain crosses the membrane as a helical span at residues 59–79; it reads ILHVTQARIAAGLPMAVIPFL. The Mitochondrial matrix portion of the chain corresponds to 80 to 107; the sequence is TANVSYKGFVSLPLNTGDLQCETCTVTR. The helical transmembrane segment at 108-128 threads the bilayer; it reads GGLVGLVFGGLYPVFLAIPVN. Topologically, residues 129–160 are mitochondrial intermembrane; the sequence is GGLAARYNSALLPEKGNILNYWIRISKPVFRK. A helical transmembrane segment spans residues 161–177; the sequence is MLFPILLQTGFAAYLGS. Over 178–197 the chain is Mitochondrial matrix; it reads RQYKLLIKALQLPEPGLEIE.

Belongs to the TMEM126 family. As to quaternary structure, interacts with OXA1L; promoting cotranslational quality control in mitochondria.

The protein resides in the mitochondrion inner membrane. Functionally, protein required for the cotranslational protein quality control in the inner membrane of the mitochondria. Associates with newly synthesized polypeptides and may act as a chaperone that cooperates with OXA1L for the insertion of newly synthesized mitochondrial proteins into the inner membrane. Required for the assembly of the ND4 module of mitochondrial complex I. The polypeptide is Transmembrane protein 126A (TMEM126A) (Bos taurus (Bovine)).